A 1938-amino-acid chain; its full sequence is Myosin-13 (1938 aa).

Residues 33 to 82 form the Myosin N-terminal SH3-like domain; the sequence is DSKKACFVADNKEMYVKGMIQTRENDKVIVKTLDDRMLTLNNDQVFPMNP. Positions 86–782 constitute a Myosin motor domain; the sequence is DKIEDMAMMT…LLGLLEEMRD (697 aa). An N6,N6,N6-trimethyllysine modification is found at Lys130. 179 to 186 serves as a coordination point for ATP; it reads GESGAGKT. Actin-binding stretches follow at residues 659–681 and 761–775; these read LNKL…IPNE and RFGN…GLLG. Residues 785 to 814 form the IQ domain; sequence LVTLMTSTQAVCRGYLMRVEFKKMMERRDS. Residues 843–1938 adopt a coiled-coil conformation; that stretch reads LLKSAEAEKE…RDVGSQKMEE (1096 aa). The tract at residues 1917–1938 is disordered; it reads AESQVNKLRAKSRDVGSQKMEE. The segment covering 1927-1938 has biased composition (basic and acidic residues); that stretch reads KSRDVGSQKMEE.

The protein belongs to the TRAFAC class myosin-kinesin ATPase superfamily. Myosin family. In terms of assembly, muscle myosin is a hexameric protein that consists of 2 heavy chain subunits (MHC), 2 alkali light chain subunits (MLC) and 2 regulatory light chain subunits (MLC-2). Specifically expressed in extraocular and laryngeal muscles.

It is found in the cytoplasm. It localises to the myofibril. Functionally, fast twitching myosin mediating the high-velocity and low-tension contractions of specific striated muscles. This is Myosin-13 (MYH13) from Homo sapiens (Human).